The following is a 507-amino-acid chain: Histone-lysine N-methyltransferase set-18 (507 aa).

8 residues coordinate Zn(2+): Cys-49, Cys-52, Cys-65, Cys-68, Cys-74, Cys-78, His-86, and Cys-90. An MYND-type zinc finger spans residues Cys-49–Cys-90.

This sequence belongs to the class V-like SAM-binding methyltransferase superfamily. Histone-lysine methyltransferase family. Expressed in pharyngeal and body wall muscles.

It carries out the reaction L-lysyl(36)-[histone H3] + 2 S-adenosyl-L-methionine = N(6),N(6)-dimethyl-L-lysyl(36)-[histone H3] + 2 S-adenosyl-L-homocysteine + 2 H(+). Histone methyltransferase. Specifically methylates 'Lys-36' of histone H3, inducing di-methylation. Plays a role in modulating lifespan and oxidative stress resistance, in a manner dependent upon daf-16/Forkhead box protein O and the Insulin/IGF-1-like signaling (IIS) mediated pathway. Represses transcription of daf-16 isoform a, perhaps by methylating histone H3 at the daf-16 promoter, which in turn leads to recruitment of histone deacetylases and thus modulation of expression. The polypeptide is Histone-lysine N-methyltransferase set-18 (Caenorhabditis elegans).